A 175-amino-acid polypeptide reads, in one-letter code: DELTA-stichotoxin-She4b (175 aa).

The plays an important role in the hemolytic activity stretch occupies residues 1 to 10 (ALAGTIIAGA). Residues 9-28 (GASLTFQVLDKVLEELGKVS) are N-terminal region. Phosphocholine-binding residues include S52, V85, S103, P105, Y131, Y135, and Y136. Residues 103–118 (SVPFDYNWYSNWWDVK) form a trp-rich region, which is important for the binding to lipid membrane region. The short motif at 141 to 143 (RGD) is the Cell attachment site, crucial for protein stability element.

As to quaternary structure, octamer or nonamer in membranes. Monomer in the soluble state. Originally described as forming tetramer in the presence of a lipidic interface. In terms of tissue distribution, expressed in tentacles and mesenteric filaments.

It is found in the secreted. The protein localises to the nematocyst. Its subcellular location is the target cell membrane. Its function is as follows. Pore-forming protein that forms cations-selective hydrophilic pores of around 1 nm and causes cardiac stimulation and cytolysis. Pore formation is a multi-step process that involves specific recognition of membrane sphingomyelin (but neither cholesterol nor phosphatidylcholine) using aromatic rich region and adjacent phosphocholine (POC) binding site, firm binding to the membrane (mainly driven by hydrophobic interactions) accompanied by the transfer of the N-terminal region to the lipid-water interface and finally pore formation after oligomerization of monomers. Cytolytic effects include red blood cells hemolysis, platelet aggregation and lysis, cytotoxic and cytostatic effects on fibroblasts. Lethality in mammals has been ascribed to severe vasospasm of coronary vessels, cardiac arrhythmia, and inotropic effects. This chain is DELTA-stichotoxin-She4b, found in Stichodactyla helianthus (Sun anemone).